Reading from the N-terminus, the 89-residue chain is Large ribosomal subunit protein bL27 (89 aa).

This sequence belongs to the bacterial ribosomal protein bL27 family.

The polypeptide is Large ribosomal subunit protein bL27 (Bacteroides fragilis (strain ATCC 25285 / DSM 2151 / CCUG 4856 / JCM 11019 / LMG 10263 / NCTC 9343 / Onslow / VPI 2553 / EN-2)).